Consider the following 197-residue polypeptide: Recombination protein RecR (197 aa).

Residues 56-71 form a C4-type zinc finger; the sequence is CVRCFSLTDAETCNFC. In terms of domain architecture, Toprim spans 79-174; it reads RVLCVVETFA…RVTRIAQGLP (96 aa).

Belongs to the RecR family.

May play a role in DNA repair. It seems to be involved in an RecBC-independent recombinational process of DNA repair. It may act with RecF and RecO. This Myxococcus xanthus (strain DK1622) protein is Recombination protein RecR.